The chain runs to 276 residues: 2-dehydro-3-deoxyphosphooctonate aldolase (276 aa).

Belongs to the KdsA family.

It is found in the cytoplasm. It carries out the reaction D-arabinose 5-phosphate + phosphoenolpyruvate + H2O = 3-deoxy-alpha-D-manno-2-octulosonate-8-phosphate + phosphate. It functions in the pathway carbohydrate biosynthesis; 3-deoxy-D-manno-octulosonate biosynthesis; 3-deoxy-D-manno-octulosonate from D-ribulose 5-phosphate: step 2/3. Its pathway is bacterial outer membrane biogenesis; lipopolysaccharide biosynthesis. This chain is 2-dehydro-3-deoxyphosphooctonate aldolase, found in Chelativorans sp. (strain BNC1).